Reading from the N-terminus, the 233-residue chain is Ribonuclease 3 (233 aa).

Residues 4-126 (LNKLMERLGH…IVGAIYIDAG (123 aa)) form the RNase III domain. Residue Glu39 coordinates Mg(2+). The active site involves Asp43. Asp112 and Glu115 together coordinate Mg(2+). The active site involves Glu115. Residues 153-222 (DAKSLLQEWL…AKRFLELLDD (70 aa)) enclose the DRBM domain.

The protein belongs to the ribonuclease III family. In terms of assembly, homodimer. The cofactor is Mg(2+).

Its subcellular location is the cytoplasm. The enzyme catalyses Endonucleolytic cleavage to 5'-phosphomonoester.. Functionally, digests double-stranded RNA. Involved in the processing of primary rRNA transcript to yield the immediate precursors to the large and small rRNAs (23S and 16S). Processes some mRNAs, and tRNAs when they are encoded in the rRNA operon. Processes pre-crRNA and tracrRNA of type II CRISPR loci if present in the organism. The chain is Ribonuclease 3 from Coxiella burnetii (strain RSA 331 / Henzerling II).